Reading from the N-terminus, the 254-residue chain is Probable phosphatase TTE1963 (254 aa).

Zn(2+) is bound by residues His14, His16, His22, His47, Glu80, His108, His139, Asp200, and His202.

This sequence belongs to the PHP family. Zn(2+) is required as a cofactor.

In Caldanaerobacter subterraneus subsp. tengcongensis (strain DSM 15242 / JCM 11007 / NBRC 100824 / MB4) (Thermoanaerobacter tengcongensis), this protein is Probable phosphatase TTE1963.